The sequence spans 623 residues: UvrABC system protein C (623 aa).

One can recognise a GIY-YIG domain in the interval Ala-21–Val-100. Positions Asp-210–Leu-245 constitute a UVR domain.

This sequence belongs to the UvrC family. Interacts with UvrB in an incision complex.

It is found in the cytoplasm. In terms of biological role, the UvrABC repair system catalyzes the recognition and processing of DNA lesions. UvrC both incises the 5' and 3' sides of the lesion. The N-terminal half is responsible for the 3' incision and the C-terminal half is responsible for the 5' incision. The polypeptide is UvrABC system protein C (Synechococcus sp. (strain JA-2-3B'a(2-13)) (Cyanobacteria bacterium Yellowstone B-Prime)).